The following is a 147-amino-acid chain: uncharacterized protein (147 aa).

The protein to M.pneumoniae MPN_465.

This is an uncharacterized protein from Mycoplasma pneumoniae (strain ATCC 29342 / M129 / Subtype 1) (Mycoplasmoides pneumoniae).